Consider the following 71-residue polypeptide: U3-scytotoxin-Sth1h (71 aa).

Residues 1–33 (MSQNSITSYKMGFAKHFFLFAVLLCATAMYSVA) form the signal peptide. Positions 34–39 (EPAQER) are excised as a propeptide. Disulfide bonds link Cys46–Cys60, Cys53–Cys64, and Cys59–Cys69.

In terms of tissue distribution, expressed by the venom gland.

It localises to the secreted. Its function is as follows. Probable insect neurotoxin with ion channel impairing activity. Does not show activity on 45 human receptors from 9 families (5-hydroxytryptamine, adrenergic, dopamine, muscarinic, histamine, neurotransmitter, opioid, sigma, and gaba(A) receptors). In vivo, when mixed with U3-SYTX-Sth1a does not cause paralytic or lethal activity when injected into crickets. It is noteworthy that crickets are evolutionarily distant from prey species. The protein is U3-scytotoxin-Sth1h of Scytodes thoracica (Spitting spider).